Here is a 31-residue protein sequence, read N- to C-terminus: Cytochrome b6-f complex subunit 6 (31 aa).

A helical transmembrane segment spans residues leucine 4–serine 26.

It belongs to the PetL family. The 4 large subunits of the cytochrome b6-f complex are cytochrome b6, subunit IV (17 kDa polypeptide, PetD), cytochrome f and the Rieske protein, while the 4 small subunits are PetG, PetL, PetM and PetN. The complex functions as a dimer.

Its subcellular location is the plastid. It is found in the chloroplast thylakoid membrane. Functionally, component of the cytochrome b6-f complex, which mediates electron transfer between photosystem II (PSII) and photosystem I (PSI), cyclic electron flow around PSI, and state transitions. PetL is important for photoautotrophic growth as well as for electron transfer efficiency and stability of the cytochrome b6-f complex. The chain is Cytochrome b6-f complex subunit 6 from Aethionema grandiflorum (Persian stone-cress).